The following is a 644-amino-acid chain: Protein DA1-related 6 (644 aa).

UIM domains follow at residues 119 to 138 (EEDELLARTLEESLKENNRR), 181 to 200 (DVDEQFAKAVKESLKNKGKG), and 244 to 263 (DEDEQLAKAVEESLKGKGQI). In terms of domain architecture, LIM zinc-binding spans 284–355 (SLCGGCNFAV…YVCKEKKMKT (72 aa)). The segment covering 572 to 589 (ASSSASSSSRTPPAASAS) has biased composition (low complexity). A disordered region spans residues 572–591 (ASSSASSSSRTPPAASASKK).

In terms of assembly, interacts with ubiquitin.

Its function is as follows. Ubiquitin receptor that probably regulates developmental process. This is Protein DA1-related 6 (DAR6) from Arabidopsis thaliana (Mouse-ear cress).